The primary structure comprises 441 residues: Arginine biosynthesis bifunctional protein ArgJ, mitochondrial (441 aa).

T177, K204, T215, E301, N436, and S441 together coordinate substrate. The active-site Nucleophile is T215.

It belongs to the ArgJ family. In terms of assembly, heterodimer of an alpha and a beta chain. The alpha and beta chains are autoproteolytically processed from a single precursor protein within the mitochondrion.

Its subcellular location is the mitochondrion matrix. The enzyme catalyses N(2)-acetyl-L-ornithine + L-glutamate = N-acetyl-L-glutamate + L-ornithine. It catalyses the reaction L-glutamate + acetyl-CoA = N-acetyl-L-glutamate + CoA + H(+). Its pathway is amino-acid biosynthesis; L-arginine biosynthesis; L-ornithine and N-acetyl-L-glutamate from L-glutamate and N(2)-acetyl-L-ornithine (cyclic): step 1/1. It functions in the pathway amino-acid biosynthesis; L-arginine biosynthesis; N(2)-acetyl-L-ornithine from L-glutamate: step 1/4. In terms of biological role, catalyzes two activities which are involved in the cyclic version of arginine biosynthesis: the synthesis of acetylglutamate from glutamate and acetyl-CoA, and of ornithine by transacetylation between acetylornithine and glutamate. The sequence is that of Arginine biosynthesis bifunctional protein ArgJ, mitochondrial from Lachancea thermotolerans (strain ATCC 56472 / CBS 6340 / NRRL Y-8284) (Yeast).